A 266-amino-acid polypeptide reads, in one-letter code: RNA polymerase II subunit A C-terminal domain phosphatase ssu-72 (266 aa).

Residues 1–31 (MSAVDTPTGAASSSKPDQNEQNGQNGGREDS) form a disordered region. The span at 9-23 (GAASSSKPDQNEQNG) shows a compositional bias: polar residues.

Belongs to the SSU72 phosphatase family. Component of the cleavage and polyadenylation factor (CPF) complex.

Its subcellular location is the nucleus. It carries out the reaction O-phospho-L-seryl-[protein] + H2O = L-seryl-[protein] + phosphate. The enzyme catalyses O-phospho-L-threonyl-[protein] + H2O = L-threonyl-[protein] + phosphate. Its function is as follows. Processively dephosphorylates Ser-5 of the heptad repeats YSPTSPS in the C-terminal domain of the largest RNA polymerase II subunit (rpb-1). Functionally, component of the cleavage and polyadenylation factor (CPF) complex, which plays a key role in polyadenylation-dependent pre-mRNA 3'-end formation and cooperates with cleavage factors including the CFIA complex and NAB4/CFIB. Ssu-72 is required for 3'-end formation of snoRNAs. This chain is RNA polymerase II subunit A C-terminal domain phosphatase ssu-72 (ssu-72), found in Neurospora crassa (strain ATCC 24698 / 74-OR23-1A / CBS 708.71 / DSM 1257 / FGSC 987).